Reading from the N-terminus, the 2042-residue chain is Cell adhesion molecule DSCAML1 (2042 aa).

Residues 1–17 form the signal peptide; the sequence is MWLVTFFLLYSLRKAHT. The Extracellular portion of the chain corresponds to 18-1592; it reads EDVGTSLYFV…AQGEGDDVKK (1575 aa). N-linked (GlcNAc...) asparagine glycosylation is found at Asn28 and Asn78. 9 consecutive Ig-like C2-type domains span residues 37 to 107, 114 to 216, 227 to 311, 315 to 403, 409 to 502, 507 to 587, 597 to 686, 691 to 785, and 789 to 886; these read SSTV…AENS, PNIR…ARLS, PTML…GTLT, PLRV…SIIT, PRIV…ARIN, PSIR…LSIS, PPLI…RQLI, PRFV…MFLT, and PAMI…LTVQ. 5 disulfides stabilise this stretch: Cys46-Cys102, Cys145-Cys197, Cys248-Cys295, Cys337-Cys387, and Cys430-Cys486. Residues Asn369, Asn472, Asn514, Asn557, Asn667, Asn711, Asn750, Asn797, and Asn810 are each glycosylated (N-linked (GlcNAc...) asparagine). 2 cysteine pairs are disulfide-bonded: Cys527/Cys576 and Cys618/Cys670. A disulfide bridge links Cys712 with Cys768. Cys811 and Cys868 are disulfide-bonded. Fibronectin type-III domains follow at residues 888–985, 990–1089, 1094–1190, and 1194–1289; these read PPDP…TEEA, PPMD…TLED, PPEN…TKED, and PPAG…AGKA. 6 N-linked (GlcNAc...) asparagine glycosylation sites follow: Asn927, Asn1083, Asn1145, Asn1163, Asn1276, and Asn1346. An Ig-like C2-type 10 domain is found at 1279 to 1368; that stretch reads EKVTIEPAGK…SGYYTCTATN (90 aa). The cysteines at positions 1312 and 1364 are disulfide-linked. 2 consecutive Fibronectin type-III domains span residues 1384-1478 and 1479-1579; these read PPDQ…THGR and EPSF…TIPP. Asn1493, Asn1532, and Asn1562 each carry an N-linked (GlcNAc...) asparagine glycan. A helical membrane pass occupies residues 1593 to 1613; it reads LFTIACPIILATLGVALLFII. The Cytoplasmic segment spans residues 1614 to 2042; it reads RKKRKEKRLK…GAYSKSYTLV (429 aa). Disordered stretches follow at residues 1716–1742, 1781–1805, 1841–1865, and 1940–2042; these read PLID…HSTR, SDSY…TESA, SSDQ…PSEP, and PPAR…YTLV. Over residues 1733 to 1742 the composition is skewed to basic residues; the sequence is KSVKSAHSTR. 2 stretches are compositionally biased toward polar residues: residues 1781–1790 and 1841–1863; these read SDSYSASLSQ and SSDQ…STPS. Positions 1951–1960 are enriched in pro residues; the sequence is AKPPGLPPPS. Low complexity predominate over residues 1961–1983; the sequence is SSSSSTTLPQRTLPMPTAASTAP. A compositionally biased stretch (pro residues) spans 1984-1995; that stretch reads APAPAPAAPAEP. Composition is skewed to low complexity over residues 1996–2005 and 2023–2034; these read PANTTTTTTT and GAGRAQKQGAGA.

Homodimer; mediates homophilic interactions to promote cell adhesion. SDK1, SDK2, DSCAM and DSCAML1 are expressed in non-overlapping subsets of interneurons and retinal ganglion cells (RGCs) that form synapses in distinct inner plexiform layer (IPL) sublaminae.

It localises to the cell membrane. Its subcellular location is the synapse. In terms of biological role, cell adhesion molecule that plays a role in neuronal self-avoidance. Promotes repulsion between specific neuronal processes of either the same cell or the same subtype of cells. Adhesion molecule that promotes lamina-specific synaptic connections in the retina: expressed in specific subsets of interneurons and retinal ganglion cells (RGCs) and promotes synaptic connectivity via homophilic interactions. This Gallus gallus (Chicken) protein is Cell adhesion molecule DSCAML1 (DSCAML1).